Here is a 66-residue protein sequence, read N- to C-terminus: Large ribosomal subunit protein bL35 (66 aa).

A compositionally biased stretch (basic residues) spans 1 to 16 (MPKQKTHRASAKRFKR). The tract at residues 1-21 (MPKQKTHRASAKRFKRTGSGG) is disordered.

It belongs to the bacterial ribosomal protein bL35 family.

This chain is Large ribosomal subunit protein bL35, found in Streptococcus mutans serotype c (strain ATCC 700610 / UA159).